Here is a 382-residue protein sequence, read N- to C-terminus: Fimbrial usher domain-containing protein YdeT (382 aa).

In Escherichia coli (strain K12), this protein is Fimbrial usher domain-containing protein YdeT (ydeT).